The sequence spans 603 residues: Sesquiterpene synthase Cad (603 aa).

The segment covering 1-13 has biased composition (polar residues); sequence MAEVGLSQNSYAS. The tract at residues 1–23 is disordered; that stretch reads MAEVGLSQNSYASANHDKKSEQQ. Mg(2+) contacts are provided by Asp-357, Asp-361, Asp-498, and Glu-506. The DDXXD motif motif lies at 357–361; sequence DDIFD.

This sequence belongs to the terpene synthase family. Tpsa subfamily. Requires Mg(2+) as cofactor. It depends on Mn(2+) as a cofactor. As to expression, mostly expressed in leaves and, to a lower extent, in stems and xylem.

It catalyses the reaction (2E,6E)-farnesyl diphosphate = beta-cadinene + diphosphate. The protein operates within secondary metabolite biosynthesis; terpenoid biosynthesis. Sesquiterpene synthase involved in the biosynthesis of volatile compounds. Mediates the conversion of (2E,6E)-farnesyl diphosphate (FPP) into beta-cadinene. Not active with geranyl diphosphate (GPP) and geranylgeranyl diphosphate (GGPP) as substrates. In Chamaecyparis formosensis (Formosan cypress), this protein is Sesquiterpene synthase Cad.